A 280-amino-acid chain; its full sequence is Urease accessory protein UreD (280 aa).

It belongs to the UreD family. In terms of assembly, ureD, UreF and UreG form a complex that acts as a GTP-hydrolysis-dependent molecular chaperone, activating the urease apoprotein by helping to assemble the nickel containing metallocenter of UreC. The UreE protein probably delivers the nickel.

It is found in the cytoplasm. In terms of biological role, required for maturation of urease via the functional incorporation of the urease nickel metallocenter. This Mesorhizobium japonicum (strain LMG 29417 / CECT 9101 / MAFF 303099) (Mesorhizobium loti (strain MAFF 303099)) protein is Urease accessory protein UreD.